A 218-amino-acid polypeptide reads, in one-letter code: ATP-dependent dethiobiotin synthetase BioD (218 aa).

10–15 (NAGKTT) contributes to the ATP binding site. A Mg(2+)-binding site is contributed by Thr-14. Lys-35 is an active-site residue. Position 39 (Thr-39) interacts with substrate. Glu-116 is a Mg(2+) binding site. ATP contacts are provided by residues 116 to 119 (EGAG) and 176 to 177 (LR).

This sequence belongs to the dethiobiotin synthetase family. Homodimer. It depends on Mg(2+) as a cofactor.

It localises to the cytoplasm. The catalysed reaction is (7R,8S)-7,8-diammoniononanoate + CO2 + ATP = (4R,5S)-dethiobiotin + ADP + phosphate + 3 H(+). It functions in the pathway cofactor biosynthesis; biotin biosynthesis; biotin from 7,8-diaminononanoate: step 1/2. In terms of biological role, catalyzes a mechanistically unusual reaction, the ATP-dependent insertion of CO2 between the N7 and N8 nitrogen atoms of 7,8-diaminopelargonic acid (DAPA, also called 7,8-diammoniononanoate) to form a ureido ring. The sequence is that of ATP-dependent dethiobiotin synthetase BioD from Helicobacter pylori (strain J99 / ATCC 700824) (Campylobacter pylori J99).